We begin with the raw amino-acid sequence, 473 residues long: Siroheme synthase (473 aa).

The precorrin-2 dehydrogenase /sirohydrochlorin ferrochelatase stretch occupies residues 1–203 (MNYLPIFIDL…GNKEQAINVL (203 aa)). NAD(+)-binding positions include 22–23 (EV) and 43–44 (KE). At Ser-128 the chain carries Phosphoserine. Positions 215–473 (GEIILVGAGP…KNKFSTLTFI (259 aa)) are uroporphyrinogen-III C-methyltransferase. S-adenosyl-L-methionine is bound at residue Pro-224. Asp-247 acts as the Proton acceptor in catalysis. Residue Lys-269 is the Proton donor of the active site. S-adenosyl-L-methionine-binding positions include 300–302 (GGD), Ile-305, Met-382, and Gly-411.

The protein in the N-terminal section; belongs to the precorrin-2 dehydrogenase / sirohydrochlorin ferrochelatase family. It in the C-terminal section; belongs to the precorrin methyltransferase family.

It catalyses the reaction uroporphyrinogen III + 2 S-adenosyl-L-methionine = precorrin-2 + 2 S-adenosyl-L-homocysteine + H(+). The enzyme catalyses precorrin-2 + NAD(+) = sirohydrochlorin + NADH + 2 H(+). The catalysed reaction is siroheme + 2 H(+) = sirohydrochlorin + Fe(2+). It participates in cofactor biosynthesis; adenosylcobalamin biosynthesis; precorrin-2 from uroporphyrinogen III: step 1/1. It functions in the pathway cofactor biosynthesis; adenosylcobalamin biosynthesis; sirohydrochlorin from precorrin-2: step 1/1. Its pathway is porphyrin-containing compound metabolism; siroheme biosynthesis; precorrin-2 from uroporphyrinogen III: step 1/1. The protein operates within porphyrin-containing compound metabolism; siroheme biosynthesis; siroheme from sirohydrochlorin: step 1/1. It participates in porphyrin-containing compound metabolism; siroheme biosynthesis; sirohydrochlorin from precorrin-2: step 1/1. In terms of biological role, multifunctional enzyme that catalyzes the SAM-dependent methylations of uroporphyrinogen III at position C-2 and C-7 to form precorrin-2 via precorrin-1. Then it catalyzes the NAD-dependent ring dehydrogenation of precorrin-2 to yield sirohydrochlorin. Finally, it catalyzes the ferrochelation of sirohydrochlorin to yield siroheme. The protein is Siroheme synthase of Buchnera aphidicola subsp. Acyrthosiphon pisum (strain APS) (Acyrthosiphon pisum symbiotic bacterium).